Here is a 272-residue protein sequence, read N- to C-terminus: Phosphonates import ATP-binding protein PhnC (272 aa).

The ABC transporter domain occupies 2-244 (LVFDKVNRVY…IQKRLYEIEH (243 aa)). 35 to 42 (GPSGAGKS) is an ATP binding site.

It belongs to the ABC transporter superfamily. Phosphonates importer (TC 3.A.1.9.1) family. In terms of assembly, the complex is composed of two ATP-binding proteins (PhnC), two transmembrane proteins (PhnE) and a solute-binding protein (PhnD).

The protein resides in the cell inner membrane. It carries out the reaction phosphonate(out) + ATP + H2O = phosphonate(in) + ADP + phosphate + H(+). Its function is as follows. Part of the ABC transporter complex PhnCDE involved in phosphonates import. Responsible for energy coupling to the transport system. This is Phosphonates import ATP-binding protein PhnC from Hydrogenovibrio crunogenus (strain DSM 25203 / XCL-2) (Thiomicrospira crunogena).